The primary structure comprises 258 residues: Imidazole glycerol phosphate synthase subunit HisF (258 aa).

Catalysis depends on residues Asp11 and Asp130.

This sequence belongs to the HisA/HisF family. In terms of assembly, heterodimer of HisH and HisF.

The protein resides in the cytoplasm. The catalysed reaction is 5-[(5-phospho-1-deoxy-D-ribulos-1-ylimino)methylamino]-1-(5-phospho-beta-D-ribosyl)imidazole-4-carboxamide + L-glutamine = D-erythro-1-(imidazol-4-yl)glycerol 3-phosphate + 5-amino-1-(5-phospho-beta-D-ribosyl)imidazole-4-carboxamide + L-glutamate + H(+). It functions in the pathway amino-acid biosynthesis; L-histidine biosynthesis; L-histidine from 5-phospho-alpha-D-ribose 1-diphosphate: step 5/9. Functionally, IGPS catalyzes the conversion of PRFAR and glutamine to IGP, AICAR and glutamate. The HisF subunit catalyzes the cyclization activity that produces IGP and AICAR from PRFAR using the ammonia provided by the HisH subunit. The chain is Imidazole glycerol phosphate synthase subunit HisF from Synechococcus sp. (strain CC9902).